A 309-amino-acid chain; its full sequence is Probable L,D-transpeptidase ErfK/SrfK (309 aa).

Positions 1 to 21 (MRRITPFFPFFVLLVSHFSLA) are cleaved as a signal peptide. The region spanning 96-231 (EGIVVNVAEM…VPVGTRVQII (136 aa)) is the L,D-TPase catalytic domain. His-191 (proton donor/acceptor) is an active-site residue. Cys-207 (nucleophile) is an active-site residue.

Belongs to the YkuD family.

The protein resides in the periplasm. Its pathway is cell wall biogenesis; peptidoglycan biosynthesis. The chain is Probable L,D-transpeptidase ErfK/SrfK (erfK) from Salmonella typhimurium (strain LT2 / SGSC1412 / ATCC 700720).